The primary structure comprises 152 residues: Large ribosomal subunit protein bL9 (152 aa).

The protein belongs to the bacterial ribosomal protein bL9 family.

Functionally, binds to the 23S rRNA. In Coxiella burnetii (strain RSA 331 / Henzerling II), this protein is Large ribosomal subunit protein bL9.